The chain runs to 278 residues: Ribosomal RNA small subunit methyltransferase A (278 aa).

S-adenosyl-L-methionine is bound by residues N28, L30, G55, E77, D103, and N122.

It belongs to the class I-like SAM-binding methyltransferase superfamily. rRNA adenine N(6)-methyltransferase family. RsmA subfamily.

The protein resides in the cytoplasm. It catalyses the reaction adenosine(1518)/adenosine(1519) in 16S rRNA + 4 S-adenosyl-L-methionine = N(6)-dimethyladenosine(1518)/N(6)-dimethyladenosine(1519) in 16S rRNA + 4 S-adenosyl-L-homocysteine + 4 H(+). Specifically dimethylates two adjacent adenosines (A1518 and A1519) in the loop of a conserved hairpin near the 3'-end of 16S rRNA in the 30S particle. May play a critical role in biogenesis of 30S subunits. The protein is Ribosomal RNA small subunit methyltransferase A of Cereibacter sphaeroides (strain ATCC 17023 / DSM 158 / JCM 6121 / CCUG 31486 / LMG 2827 / NBRC 12203 / NCIMB 8253 / ATH 2.4.1.) (Rhodobacter sphaeroides).